The sequence spans 336 residues: Fructose-1,6-bisphosphatase class 1 (336 aa).

The Mg(2+) site is built by glutamate 92, aspartate 115, leucine 117, and aspartate 118. Residues 118 to 121 (DGSS), asparagine 211, tyrosine 244, 262 to 264 (YLY), and lysine 274 each bind substrate. Residue glutamate 280 coordinates Mg(2+).

This sequence belongs to the FBPase class 1 family. Homotetramer. It depends on Mg(2+) as a cofactor.

The protein resides in the cytoplasm. The enzyme catalyses beta-D-fructose 1,6-bisphosphate + H2O = beta-D-fructose 6-phosphate + phosphate. The protein operates within carbohydrate biosynthesis; gluconeogenesis. This Vibrio atlanticus (strain LGP32) (Vibrio splendidus (strain Mel32)) protein is Fructose-1,6-bisphosphatase class 1.